The primary structure comprises 57 residues: Small ribosomal subunit protein bS21 (57 aa).

The interval Ser24–Phe57 is disordered. A compositionally biased stretch (basic and acidic residues) spans Glu31 to Ser42. Positions Val43 to Phe57 are enriched in basic residues.

The protein belongs to the bacterial ribosomal protein bS21 family.

The chain is Small ribosomal subunit protein bS21 (rpsU) from Listeria innocua serovar 6a (strain ATCC BAA-680 / CLIP 11262).